We begin with the raw amino-acid sequence, 399 residues long: Protein shisa-8 (399 aa).

Residues 1-36 (MERAGARGQRCGRRSHGLPLALRLALLLAGSPSGRA) form the signal peptide. At 37-136 (GAPEEQEIAG…APRDPARERS (100 aa)) the chain is on the extracellular side. Residue Asn-73 is glycosylated (N-linked (GlcNAc...) asparagine). A helical membrane pass occupies residues 137–157 (HTAVYAVCGVAALLVLVGIGA). At 158-399 (RLGLERAHSP…STNSKAEVTV (242 aa)) the chain is on the cytoplasmic side. Disordered stretches follow at residues 207-248 (GDGV…GGSL) and 378-399 (FYSS…EVTV). Positions 389 to 399 (LSTNSKAEVTV) are enriched in polar residues.

Belongs to the shisa family. Interacts with AMPAR subunits GRIA1 and GRIA2. In terms of tissue distribution, brain-specific. Highly expressed in cerebellum and olfactory bulb.

The protein localises to the membrane. May regulate trafficking and current kinetics of AMPA-type glutamate receptor (AMPAR) at synapses. The sequence is that of Protein shisa-8 from Mus musculus (Mouse).